Consider the following 428-residue polypeptide: tRNA modification GTPase MnmE (428 aa).

Positions 20, 77, and 117 each coordinate (6S)-5-formyl-5,6,7,8-tetrahydrofolate. Positions 213–351 constitute a TrmE-type G domain; it reads GFEIALVGAP…LLEKIRSVFS (139 aa). Asn-223 provides a ligand contact to K(+). Residues 223 to 228, 242 to 248, and 267 to 270 each bind GTP; these read NAGKST, SEIAGTT, and DTAG. Mg(2+) is bound at residue Ser-227. Ser-242, Ile-244, and Thr-247 together coordinate K(+). Thr-248 provides a ligand contact to Mg(2+). A (6S)-5-formyl-5,6,7,8-tetrahydrofolate-binding site is contributed by Lys-428.

This sequence belongs to the TRAFAC class TrmE-Era-EngA-EngB-Septin-like GTPase superfamily. TrmE GTPase family. In terms of assembly, homodimer. Heterotetramer of two MnmE and two MnmG subunits. Requires K(+) as cofactor.

It is found in the cytoplasm. Functionally, exhibits a very high intrinsic GTPase hydrolysis rate. Involved in the addition of a carboxymethylaminomethyl (cmnm) group at the wobble position (U34) of certain tRNAs, forming tRNA-cmnm(5)s(2)U34. The chain is tRNA modification GTPase MnmE from Roseobacter denitrificans (strain ATCC 33942 / OCh 114) (Erythrobacter sp. (strain OCh 114)).